A 352-amino-acid chain; its full sequence is uncharacterized protein (352 aa).

The N-terminal 55 residues, Met-1–Ser-55, are a transit peptide targeting the chloroplast.

It belongs to the methyltransferase superfamily.

The protein resides in the plastid. The protein localises to the chloroplast. Its subcellular location is the plastoglobule. This is an uncharacterized protein from Arabidopsis thaliana (Mouse-ear cress).